Reading from the N-terminus, the 311-residue chain is Malate dehydrogenase (311 aa).

Residues 7 to 13 and Asp34 each bind NAD(+); that span reads GAAGGIG. Positions 81 and 87 each coordinate substrate. Residues Asn94 and 117 to 119 contribute to the NAD(+) site; that span reads ITN. Substrate is bound by residues Asn119 and Arg153. The Proton acceptor role is filled by His177. Position 227 (Met227) interacts with NAD(+).

It belongs to the LDH/MDH superfamily. MDH type 1 family. As to quaternary structure, homodimer.

It catalyses the reaction (S)-malate + NAD(+) = oxaloacetate + NADH + H(+). In terms of biological role, catalyzes the reversible oxidation of malate to oxaloacetate. This chain is Malate dehydrogenase, found in Vibrio campbellii (strain ATCC BAA-1116).